The chain runs to 456 residues: Sulfate adenylyltransferase (456 aa).

It belongs to the sulfate adenylyltransferase family.

It carries out the reaction sulfate + ATP + H(+) = adenosine 5'-phosphosulfate + diphosphate. It participates in sulfur metabolism; hydrogen sulfide biosynthesis; sulfite from sulfate: step 1/3. The chain is Sulfate adenylyltransferase (sat) from Archaeoglobus fulgidus (strain ATCC 49558 / DSM 4304 / JCM 9628 / NBRC 100126 / VC-16).